The primary structure comprises 241 residues: Spheroidene monooxygenase (241 aa).

The protein belongs to the CrtA family. Heme is required as a cofactor.

It catalyses the reaction spheroidene + 4 reduced [2Fe-2S]-[ferredoxin] + 2 O2 + 4 H(+) = spheroiden-2-one + 4 oxidized [2Fe-2S]-[ferredoxin] + 3 H2O. The enzyme catalyses spirilloxanthin + 4 reduced [2Fe-2S]-[ferredoxin] + 2 O2 + 4 H(+) = 2-oxospirilloxanthin + 4 oxidized [2Fe-2S]-[ferredoxin] + 3 H2O. The catalysed reaction is 2-oxospirilloxanthin + 4 reduced [2Fe-2S]-[ferredoxin] + 2 O2 + 4 H(+) = 2,2'-dioxospirilloxanthin + 4 oxidized [2Fe-2S]-[ferredoxin] + 3 H2O. It carries out the reaction spheroidene + 2 reduced [2Fe-2S]-[ferredoxin] + O2 + 2 H(+) = 2-hydroxyspheroidene + 2 oxidized [2Fe-2S]-[ferredoxin] + H2O. It catalyses the reaction 2-hydroxyspheroidene + 2 reduced [2Fe-2S]-[ferredoxin] + O2 + 2 H(+) = 2,2-dihydroxyspheroidene + 2 oxidized [2Fe-2S]-[ferredoxin] + H2O. The enzyme catalyses 2,2-dihydroxyspheroidene = spheroiden-2-one + H2O. The catalysed reaction is spirilloxanthin + 2 reduced [2Fe-2S]-[ferredoxin] + O2 + 2 H(+) = 2-hydroxyspirilloxanthin + 2 oxidized [2Fe-2S]-[ferredoxin] + H2O. It carries out the reaction 2-hydroxyspirilloxanthin + 2 reduced [2Fe-2S]-[ferredoxin] + O2 + 2 H(+) = 2,2-dihydroxyspirilloxanthin + 2 oxidized [2Fe-2S]-[ferredoxin] + H2O. It catalyses the reaction 2,2-dihydroxyspirilloxanthin = 2-oxospirilloxanthin + H2O. The enzyme catalyses 2-oxospirilloxanthin + 2 reduced [2Fe-2S]-[ferredoxin] + O2 + 2 H(+) = 2'-hydroxy-2-oxospirilloxanthin + 2 oxidized [2Fe-2S]-[ferredoxin] + H2O. The catalysed reaction is 2'-hydroxy-2-oxospirilloxanthin + 2 reduced [2Fe-2S]-[ferredoxin] + O2 + 2 H(+) = 2',2'-dihydroxy-2-oxospirilloxanthin + 2 oxidized [2Fe-2S]-[ferredoxin] + H2O. It carries out the reaction 2',2'-dihydroxy-2-oxospirilloxanthin = 2,2'-dioxospirilloxanthin + H2O. It functions in the pathway carotenoid biosynthesis; spheroidene biosynthesis. Involved in the biosynthesis of the carotenoid spheroidene. Catalyzes the introduction of one keto group at the C-2 position of spheroidene. In vitro, can also catalyze the introduction of two keto groups at the C-2 and C-2' positions of spirilloxanthin, but spirilloxanthin biosynthesis pathway is not present in R.capsulatus. This chain is Spheroidene monooxygenase, found in Rhodobacter capsulatus (strain ATCC BAA-309 / NBRC 16581 / SB1003).